The chain runs to 147 residues: Globin, polymeric component P3 (147 aa).

One can recognise a Globin domain in the interval 2–146 (HLTADQVAAL…ISDALIAGLE (145 aa)). Histidine 96 lines the heme b pocket.

This sequence belongs to the globin family. In terms of assembly, polymer.

This chain is Globin, polymeric component P3, found in Glycera dibranchiata (Bloodworm).